The chain runs to 331 residues: Glyceraldehyde-3-phosphate dehydrogenase 2 (331 aa).

NAD(+) contacts are provided by residues 11–12, Asp-33, and Arg-78; that span reads RI. Residues 148–150, Thr-179, 208–209, and Arg-231 each bind D-glyceraldehyde 3-phosphate; these read SCT and TG. Catalysis depends on Cys-149, which acts as the Nucleophile. Asn-313 is a binding site for NAD(+).

Belongs to the glyceraldehyde-3-phosphate dehydrogenase family. In terms of assembly, homotetramer.

It localises to the cytoplasm. It catalyses the reaction D-glyceraldehyde 3-phosphate + phosphate + NAD(+) = (2R)-3-phospho-glyceroyl phosphate + NADH + H(+). It functions in the pathway carbohydrate degradation; glycolysis; pyruvate from D-glyceraldehyde 3-phosphate: step 1/5. This is Glyceraldehyde-3-phosphate dehydrogenase 2 (GAP2) from Kluyveromyces marxianus (Yeast).